The sequence spans 212 residues: Phosphatidylserine decarboxylase proenzyme (212 aa).

The active-site Schiff-base intermediate with substrate; via pyruvic acid is serine 182. The residue at position 182 (serine 182) is a Pyruvic acid (Ser); by autocatalysis.

This sequence belongs to the phosphatidylserine decarboxylase family. PSD-A subfamily. Heterodimer of a large membrane-associated beta subunit and a small pyruvoyl-containing alpha subunit. Pyruvate serves as cofactor. In terms of processing, is synthesized initially as an inactive proenzyme. Formation of the active enzyme involves a self-maturation process in which the active site pyruvoyl group is generated from an internal serine residue via an autocatalytic post-translational modification. Two non-identical subunits are generated from the proenzyme in this reaction, and the pyruvate is formed at the N-terminus of the alpha chain, which is derived from the carboxyl end of the proenzyme. The post-translation cleavage follows an unusual pathway, termed non-hydrolytic serinolysis, in which the side chain hydroxyl group of the serine supplies its oxygen atom to form the C-terminus of the beta chain, while the remainder of the serine residue undergoes an oxidative deamination to produce ammonia and the pyruvoyl prosthetic group on the alpha chain.

It is found in the cell membrane. The enzyme catalyses a 1,2-diacyl-sn-glycero-3-phospho-L-serine + H(+) = a 1,2-diacyl-sn-glycero-3-phosphoethanolamine + CO2. Its pathway is phospholipid metabolism; phosphatidylethanolamine biosynthesis; phosphatidylethanolamine from CDP-diacylglycerol: step 2/2. Catalyzes the formation of phosphatidylethanolamine (PtdEtn) from phosphatidylserine (PtdSer). The polypeptide is Phosphatidylserine decarboxylase proenzyme (Chlorobium chlorochromatii (strain CaD3)).